A 328-amino-acid polypeptide reads, in one-letter code: Glycerol-3-phosphate dehydrogenase [NAD(P)+] (328 aa).

Trp11, Arg30, and Lys103 together coordinate NADPH. Positions 103, 132, and 134 each coordinate sn-glycerol 3-phosphate. Ala136 serves as a coordination point for NADPH. Residues Lys187, Asp240, Ser250, Arg251, and Asn252 each contribute to the sn-glycerol 3-phosphate site. The Proton acceptor role is filled by Lys187. Arg251 provides a ligand contact to NADPH. Residues Val275 and Glu277 each coordinate NADPH.

The protein belongs to the NAD-dependent glycerol-3-phosphate dehydrogenase family.

It localises to the cytoplasm. It catalyses the reaction sn-glycerol 3-phosphate + NAD(+) = dihydroxyacetone phosphate + NADH + H(+). It carries out the reaction sn-glycerol 3-phosphate + NADP(+) = dihydroxyacetone phosphate + NADPH + H(+). It participates in membrane lipid metabolism; glycerophospholipid metabolism. In terms of biological role, catalyzes the reduction of the glycolytic intermediate dihydroxyacetone phosphate (DHAP) to sn-glycerol 3-phosphate (G3P), the key precursor for phospholipid synthesis. In Aromatoleum aromaticum (strain DSM 19018 / LMG 30748 / EbN1) (Azoarcus sp. (strain EbN1)), this protein is Glycerol-3-phosphate dehydrogenase [NAD(P)+].